A 123-amino-acid polypeptide reads, in one-letter code: Small ribosomal subunit protein uS11 (123 aa).

It belongs to the universal ribosomal protein uS11 family. In terms of assembly, part of the 30S ribosomal subunit. Interacts with proteins S7 and S18. Binds to IF-3.

In terms of biological role, located on the platform of the 30S subunit, it bridges several disparate RNA helices of the 16S rRNA. Forms part of the Shine-Dalgarno cleft in the 70S ribosome. The sequence is that of Small ribosomal subunit protein uS11 from Coxiella burnetii (strain CbuG_Q212) (Coxiella burnetii (strain Q212)).